The primary structure comprises 276 residues: Phosphate import ATP-binding protein PstB 2 (276 aa).

The ABC transporter domain maps to 22–262; that stretch reads MAAVNLTLGF…PKHAETARYV (241 aa). ATP is bound at residue 54–61; the sequence is GPTGSGKT.

It belongs to the ABC transporter superfamily. Phosphate importer (TC 3.A.1.7) family. As to quaternary structure, the complex is composed of two ATP-binding proteins (PstB), two transmembrane proteins (PstC and PstA) and a solute-binding protein (PstS).

The protein localises to the cell membrane. It carries out the reaction phosphate(out) + ATP + H2O = ADP + 2 phosphate(in) + H(+). Its function is as follows. Part of the ABC transporter complex PstSACB involved in phosphate import. Responsible for energy coupling to the transport system. The sequence is that of Phosphate import ATP-binding protein PstB 2 from Mycobacterium bovis (strain ATCC BAA-935 / AF2122/97).